Here is a 449-residue protein sequence, read N- to C-terminus: UDP-N-acetylmuramoylalanine--D-glutamate ligase (449 aa).

111 to 117 lines the ATP pocket; that stretch reads GTNGKST.

This sequence belongs to the MurCDEF family.

The protein localises to the cytoplasm. It catalyses the reaction UDP-N-acetyl-alpha-D-muramoyl-L-alanine + D-glutamate + ATP = UDP-N-acetyl-alpha-D-muramoyl-L-alanyl-D-glutamate + ADP + phosphate + H(+). It participates in cell wall biogenesis; peptidoglycan biosynthesis. Cell wall formation. Catalyzes the addition of glutamate to the nucleotide precursor UDP-N-acetylmuramoyl-L-alanine (UMA). The sequence is that of UDP-N-acetylmuramoylalanine--D-glutamate ligase from Rickettsia felis (strain ATCC VR-1525 / URRWXCal2) (Rickettsia azadi).